The chain runs to 199 residues: Transgelin-2 (199 aa).

Ala-2 is subject to N-acetylalanine. The residue at position 11 (Ser-11) is a Phosphoserine. N6-acetyllysine occurs at positions 17 and 20. Residues 24–136 form the Calponin-homology (CH) domain; the sequence is ADLEQILIQW…RTLMNLGGLA (113 aa). Phosphoserine is present on Ser-163. Lys-171 is covalently cross-linked (Glycyl lysine isopeptide (Lys-Gly) (interchain with G-Cter in SUMO2)). The Calponin-like repeat unit spans residues 174-199; the sequence is IGLQMGTNRGASQAGMTGYGMPRQIL. Thr-180 is modified (phosphothreonine). Omega-N-methylarginine is present on residues Arg-182 and Arg-196.

This sequence belongs to the calponin family.

The protein is Transgelin-2 (TAGLN2) of Bos taurus (Bovine).